Here is a 375-residue protein sequence, read N- to C-terminus: Succinyl-diaminopimelate desuccinylase (375 aa).

H66 serves as a coordination point for Zn(2+). The active site involves D68. Residue D99 participates in Zn(2+) binding. E133 acts as the Proton acceptor in catalysis. 3 residues coordinate Zn(2+): E134, E162, and H348.

It belongs to the peptidase M20A family. DapE subfamily. Homodimer. Requires Zn(2+) as cofactor. Co(2+) serves as cofactor.

The catalysed reaction is N-succinyl-(2S,6S)-2,6-diaminopimelate + H2O = (2S,6S)-2,6-diaminopimelate + succinate. It functions in the pathway amino-acid biosynthesis; L-lysine biosynthesis via DAP pathway; LL-2,6-diaminopimelate from (S)-tetrahydrodipicolinate (succinylase route): step 3/3. In terms of biological role, catalyzes the hydrolysis of N-succinyl-L,L-diaminopimelic acid (SDAP), forming succinate and LL-2,6-diaminopimelate (DAP), an intermediate involved in the bacterial biosynthesis of lysine and meso-diaminopimelic acid, an essential component of bacterial cell walls. The polypeptide is Succinyl-diaminopimelate desuccinylase (Cronobacter sakazakii (strain ATCC BAA-894) (Enterobacter sakazakii)).